A 247-amino-acid chain; its full sequence is 1-(5-phosphoribosyl)-5-[(5-phosphoribosylamino)methylideneamino] imidazole-4-carboxamide isomerase (247 aa).

Aspartate 8 acts as the Proton acceptor in catalysis. Aspartate 131 functions as the Proton donor in the catalytic mechanism.

Belongs to the HisA/HisF family.

Its subcellular location is the cytoplasm. It catalyses the reaction 1-(5-phospho-beta-D-ribosyl)-5-[(5-phospho-beta-D-ribosylamino)methylideneamino]imidazole-4-carboxamide = 5-[(5-phospho-1-deoxy-D-ribulos-1-ylimino)methylamino]-1-(5-phospho-beta-D-ribosyl)imidazole-4-carboxamide. It participates in amino-acid biosynthesis; L-histidine biosynthesis; L-histidine from 5-phospho-alpha-D-ribose 1-diphosphate: step 4/9. The chain is 1-(5-phosphoribosyl)-5-[(5-phosphoribosylamino)methylideneamino] imidazole-4-carboxamide isomerase from Methylobacillus flagellatus (strain ATCC 51484 / DSM 6875 / VKM B-1610 / KT).